A 241-amino-acid chain; its full sequence is Triosephosphate isomerase (241 aa).

9-11 is a substrate binding site; that stretch reads NWK. Catalysis depends on His96, which acts as the Electrophile. Catalysis depends on Glu165, which acts as the Proton acceptor. Residues Gly171, Ser204, and 225-226 contribute to the substrate site; that span reads GG.

It belongs to the triosephosphate isomerase family. As to quaternary structure, homodimer.

The protein localises to the cytoplasm. The catalysed reaction is D-glyceraldehyde 3-phosphate = dihydroxyacetone phosphate. The protein operates within carbohydrate biosynthesis; gluconeogenesis. It functions in the pathway carbohydrate degradation; glycolysis; D-glyceraldehyde 3-phosphate from glycerone phosphate: step 1/1. Functionally, involved in the gluconeogenesis. Catalyzes stereospecifically the conversion of dihydroxyacetone phosphate (DHAP) to D-glyceraldehyde-3-phosphate (G3P). In Prochlorococcus marinus subsp. pastoris (strain CCMP1986 / NIES-2087 / MED4), this protein is Triosephosphate isomerase.